We begin with the raw amino-acid sequence, 150 residues long: Deoxyuridine 5'-triphosphate nucleotidohydrolase (150 aa).

Substrate-binding positions include 69-71, N82, and 86-88; these read RSG and LID.

It belongs to the dUTPase family. Requires Mg(2+) as cofactor.

The enzyme catalyses dUTP + H2O = dUMP + diphosphate + H(+). The protein operates within pyrimidine metabolism; dUMP biosynthesis; dUMP from dCTP (dUTP route): step 2/2. Its function is as follows. This enzyme is involved in nucleotide metabolism: it produces dUMP, the immediate precursor of thymidine nucleotides and it decreases the intracellular concentration of dUTP so that uracil cannot be incorporated into DNA. This chain is Deoxyuridine 5'-triphosphate nucleotidohydrolase, found in Methylobacillus flagellatus (strain ATCC 51484 / DSM 6875 / VKM B-1610 / KT).